The following is a 292-amino-acid chain: Elongation factor Ts (292 aa).

The tract at residues 79–82 is involved in Mg(2+) ion dislocation from EF-Tu; the sequence is TDFV.

This sequence belongs to the EF-Ts family.

Its subcellular location is the cytoplasm. In terms of biological role, associates with the EF-Tu.GDP complex and induces the exchange of GDP to GTP. It remains bound to the aminoacyl-tRNA.EF-Tu.GTP complex up to the GTP hydrolysis stage on the ribosome. The chain is Elongation factor Ts from Metamycoplasma arthritidis (strain 158L3-1) (Mycoplasma arthritidis).